A 143-amino-acid polypeptide reads, in one-letter code: Large ribosomal subunit protein uL22c (143 aa).

Belongs to the universal ribosomal protein uL22 family. As to quaternary structure, part of the 50S ribosomal subunit.

It is found in the plastid. The protein localises to the chloroplast. This protein binds specifically to 23S rRNA. In terms of biological role, the globular domain of the protein is located near the polypeptide exit tunnel on the outside of the subunit, while an extended beta-hairpin is found that lines the wall of the exit tunnel in the center of the 70S ribosome. In Piper cenocladum (Ant piper), this protein is Large ribosomal subunit protein uL22c (rpl22).